Reading from the N-terminus, the 192-residue chain is Phosphoheptose isomerase (192 aa).

One can recognise an SIS domain in the interval 37 to 192 (IAASLRDGGK…IMLIEKELAV (156 aa)). 52–54 (NGG) serves as a coordination point for substrate. The Zn(2+) site is built by H61 and E65. Residues E65, 93–94 (ND), 119–121 (STS), S124, and Q172 contribute to the substrate site. 2 residues coordinate Zn(2+): Q172 and H180.

The protein belongs to the SIS family. GmhA subfamily. Homotetramer. The cofactor is Zn(2+).

Its subcellular location is the cytoplasm. The catalysed reaction is 2 D-sedoheptulose 7-phosphate = D-glycero-alpha-D-manno-heptose 7-phosphate + D-glycero-beta-D-manno-heptose 7-phosphate. It participates in carbohydrate biosynthesis; D-glycero-D-manno-heptose 7-phosphate biosynthesis; D-glycero-alpha-D-manno-heptose 7-phosphate and D-glycero-beta-D-manno-heptose 7-phosphate from sedoheptulose 7-phosphate: step 1/1. Its function is as follows. Catalyzes the isomerization of sedoheptulose 7-phosphate in D-glycero-D-manno-heptose 7-phosphate. The chain is Phosphoheptose isomerase from Tolumonas auensis (strain DSM 9187 / NBRC 110442 / TA 4).